Consider the following 704-residue polypeptide: Glycine--tRNA ligase beta subunit (704 aa).

This sequence belongs to the class-II aminoacyl-tRNA synthetase family. In terms of assembly, tetramer of two alpha and two beta subunits.

It is found in the cytoplasm. It catalyses the reaction tRNA(Gly) + glycine + ATP = glycyl-tRNA(Gly) + AMP + diphosphate. In Rhizobium etli (strain ATCC 51251 / DSM 11541 / JCM 21823 / NBRC 15573 / CFN 42), this protein is Glycine--tRNA ligase beta subunit.